We begin with the raw amino-acid sequence, 452 residues long: MGFFLCSSSSIFFKFGISIIFLVSFSGLTPSEAYDPLDPSGNITVKWDIITWTGDGYVATVTVYNFQQYRHIQAPGWTLGWSWAKREVIWGMNGGQTTEQGDCSKFKGTIPHCCKKTPSVVDLLPGSPYNQQIANCCRGGVLNSWAQDPATAVSAFQLTVGQAGTTNKTVRVPKNFTLKAPGPGYTCSPAKIVKPTRFIGTDKRRVTQALMTWNVTCTYSQFLAQKTPTCCVSLSSFYNKTIVSCPTCSCGCRNTSQPGNCVDPKGPRIASVIPNPGKNAYIPPLVQCTKHMCPVRIHWHVKVNYKQYWRVKVTITNFNYNMNYSQWNLVVQHPNFDNLTQTFSFNYKPLTPYASINDTGILWGIKFYNDLLMQAGPFGNVQSELLFQKEASAFTFEKGWAFPRRIYFNGDNCVMPPPDSYPWLPNTGSHKSVGSLFAAMALLLIVFLHGNL.

The N-terminal stretch at Met1–Ala33 is a signal peptide. Residues Asn42, Asn167, Asn175, Asn214, Asn239, Asn254, Asn323, Asn338, and Asn357 are each glycosylated (N-linked (GlcNAc...) asparagine). Ser432 carries GPI-anchor amidated serine lipidation. A propeptide spans Val433–Leu452 (removed in mature form).

Belongs to the COBRA family. Expressed in roots, stems, leaves, flowers and siliques.

Its subcellular location is the cell membrane. This is COBRA-like protein 1 (COBL1) from Arabidopsis thaliana (Mouse-ear cress).